Here is a 243-residue protein sequence, read N- to C-terminus: Proteasome subunit beta (243 aa).

The segment at 1–40 is disordered; the sequence is MRTPMNNDISGRPDSLNGDRSDVFSPELGEFPNADDRAND. The propeptide at 1 to 49 is removed in mature form; by autocatalysis; sequence MRTPMNNDISGRPDSLNGDRSDVFSPELGEFPNADDRANDIGDMETKTG. Threonine 50 acts as the Nucleophile in catalysis.

It belongs to the peptidase T1B family. As to quaternary structure, the 20S proteasome core is composed of 14 alpha and 14 beta subunits that assemble into four stacked heptameric rings, resulting in a barrel-shaped structure. The two inner rings, each composed of seven catalytic beta subunits, are sandwiched by two outer rings, each composed of seven alpha subunits. The catalytic chamber with the active sites is on the inside of the barrel. Has a gated structure, the ends of the cylinder being occluded by the N-termini of the alpha-subunits. Is capped at one or both ends by the proteasome regulatory ATPase, PAN.

The protein resides in the cytoplasm. The catalysed reaction is Cleavage of peptide bonds with very broad specificity.. Its activity is regulated as follows. The formation of the proteasomal ATPase PAN-20S proteasome complex, via the docking of the C-termini of PAN into the intersubunit pockets in the alpha-rings, triggers opening of the gate for substrate entry. Interconversion between the open-gate and close-gate conformations leads to a dynamic regulation of the 20S proteasome proteolysis activity. Functionally, component of the proteasome core, a large protease complex with broad specificity involved in protein degradation. This chain is Proteasome subunit beta, found in Haloquadratum walsbyi (strain DSM 16790 / HBSQ001).